Reading from the N-terminus, the 188-residue chain is Large ribosomal subunit protein uL5 (188 aa).

Belongs to the universal ribosomal protein uL5 family. In terms of assembly, part of the 50S ribosomal subunit; part of the 5S rRNA/L5/L18/L25 subcomplex. Contacts the 5S rRNA and the P site tRNA. Forms a bridge to the 30S subunit in the 70S ribosome.

In terms of biological role, this is one of the proteins that bind and probably mediate the attachment of the 5S RNA into the large ribosomal subunit, where it forms part of the central protuberance. In the 70S ribosome it contacts protein S13 of the 30S subunit (bridge B1b), connecting the 2 subunits; this bridge is implicated in subunit movement. Contacts the P site tRNA; the 5S rRNA and some of its associated proteins might help stabilize positioning of ribosome-bound tRNAs. The chain is Large ribosomal subunit protein uL5 from Aquifex pyrophilus.